The primary structure comprises 464 residues: tRNA modification GTPase MnmE (464 aa).

The (6S)-5-formyl-5,6,7,8-tetrahydrofolate site is built by R25, E87, and K130. A TrmE-type G domain is found at 226–386; the sequence is GLSVVLAGQP…LREELLRIAG (161 aa). N236 provides a ligand contact to K(+). Residues 236-241, 255-261, and 280-283 contribute to the GTP site; these read NVGKSS, TPIAGTT, and DTAG. S240 is a Mg(2+) binding site. K(+) is bound by residues T255, I257, and T260. Residue T261 coordinates Mg(2+). K464 provides a ligand contact to (6S)-5-formyl-5,6,7,8-tetrahydrofolate.

The protein belongs to the TRAFAC class TrmE-Era-EngA-EngB-Septin-like GTPase superfamily. TrmE GTPase family. As to quaternary structure, homodimer. Heterotetramer of two MnmE and two MnmG subunits. The cofactor is K(+).

It localises to the cytoplasm. Exhibits a very high intrinsic GTPase hydrolysis rate. Involved in the addition of a carboxymethylaminomethyl (cmnm) group at the wobble position (U34) of certain tRNAs, forming tRNA-cmnm(5)s(2)U34. This Paraburkholderia xenovorans (strain LB400) protein is tRNA modification GTPase MnmE.